Here is a 162-residue protein sequence, read N- to C-terminus: Ribosomal RNA large subunit methyltransferase H (162 aa).

Position 108 (Gly-108) interacts with S-adenosyl-L-methionine.

The protein belongs to the RNA methyltransferase RlmH family. Homodimer.

It is found in the cytoplasm. The enzyme catalyses pseudouridine(1915) in 23S rRNA + S-adenosyl-L-methionine = N(3)-methylpseudouridine(1915) in 23S rRNA + S-adenosyl-L-homocysteine + H(+). Specifically methylates the pseudouridine at position 1915 (m3Psi1915) in 23S rRNA. The protein is Ribosomal RNA large subunit methyltransferase H of Methylobacterium nodulans (strain LMG 21967 / CNCM I-2342 / ORS 2060).